The primary structure comprises 157 residues: Glutathione peroxidase homolog BsaA (157 aa).

C35 is an active-site residue.

Belongs to the glutathione peroxidase family.

In Halalkalibacterium halodurans (strain ATCC BAA-125 / DSM 18197 / FERM 7344 / JCM 9153 / C-125) (Bacillus halodurans), this protein is Glutathione peroxidase homolog BsaA (bsaA).